The primary structure comprises 278 residues: Purine nucleoside phosphorylase YlmD (278 aa).

Residues His-87, Cys-132, and His-149 each contribute to the Zn(2+) site.

It belongs to the purine nucleoside phosphorylase YfiH/LACC1 family. Homodimer. Requires Cu(2+) as cofactor. It depends on Zn(2+) as a cofactor.

It carries out the reaction adenosine + phosphate = alpha-D-ribose 1-phosphate + adenine. It catalyses the reaction S-methyl-5'-thioadenosine + phosphate = 5-(methylsulfanyl)-alpha-D-ribose 1-phosphate + adenine. The enzyme catalyses inosine + phosphate = alpha-D-ribose 1-phosphate + hypoxanthine. The catalysed reaction is adenosine + H2O + H(+) = inosine + NH4(+). Functionally, purine nucleoside enzyme that catalyzes the phosphorolysis of adenosine and inosine nucleosides, yielding D-ribose 1-phosphate and the respective free bases, adenine and hypoxanthine. Also catalyzes the phosphorolysis of S-methyl-5'-thioadenosine into adenine and S-methyl-5-thio-alpha-D-ribose 1-phosphate. Also has adenosine deaminase activity. The protein is Purine nucleoside phosphorylase YlmD (ylmD) of Bacillus subtilis (strain 168).